The following is an 864-amino-acid chain: Mitochondrial 15S rRNA processing factor CCM1 (864 aa).

The transit peptide at 1–76 (MYMARCGPKN…REFSNTLKER (76 aa)) directs the protein to the mitochondrion. PPR repeat units follow at residues 319 to 353 (NKQNLTTVIQFYSRKEMTKQAWNTFDTMKFLSTKH) and 356 to 390 (DICTYNTMLRICEKERNFPKALDLFQEIQDHNIKP).

It belongs to the CCM1 family. Binds to mitochondrial small subunit 15S rRNA.

It is found in the mitochondrion. Functionally, regulates mitochondrial small subunit maturation by controlling 15S rRNA 5'-end processing. Localizes to the 5' precursor of the 15S rRNA in a position that is subsequently occupied by mS47 in the mature yeast mtSSU. Uses structure and sequence-specific RNA recognition, binding to a single-stranded region of the precursor and specifically recognizing bases -6 to -1. The exchange of Ccm1 for mS47 is coupled to the irreversible removal of precursor rRNA that is accompanied by conformational changes of the mitoribosomal proteins uS5m and mS26. These conformational changes signal completion of 5'-end rRNA processing through protection of the mature 5'-end of the 15S rRNA and stabilization of mS47. The removal of the 5' precursor together with the dissociation of Ccm1 may be catalyzed by the 5'-3' exoribonuclease Pet127. Involved in the specific removal of group I introns in mitochondrial encoded transcripts. The polypeptide is Mitochondrial 15S rRNA processing factor CCM1 (CCM1) (Saccharomyces cerevisiae (strain RM11-1a) (Baker's yeast)).